The chain runs to 424 residues: Histidine--tRNA ligase (424 aa).

The protein belongs to the class-II aminoacyl-tRNA synthetase family. Homodimer.

It is found in the cytoplasm. The enzyme catalyses tRNA(His) + L-histidine + ATP = L-histidyl-tRNA(His) + AMP + diphosphate + H(+). This is Histidine--tRNA ligase from Bacillus velezensis (strain DSM 23117 / BGSC 10A6 / LMG 26770 / FZB42) (Bacillus amyloliquefaciens subsp. plantarum).